A 168-amino-acid polypeptide reads, in one-letter code: G/U mismatch-specific DNA glycosylase (168 aa).

The protein belongs to the uracil-DNA glycosylase (UDG) superfamily. TDG/mug family. In terms of assembly, binds DNA as a monomer.

It is found in the cytoplasm. It catalyses the reaction Specifically hydrolyzes mismatched double-stranded DNA and polynucleotides, releasing free uracil.. Its function is as follows. Excises ethenocytosine and uracil, which can arise by alkylation or deamination of cytosine, respectively, from the corresponding mispairs with guanine in ds-DNA. It is capable of hydrolyzing the carbon-nitrogen bond between the sugar-phosphate backbone of the DNA and the mispaired base. The complementary strand guanine functions in substrate recognition. Required for DNA damage lesion repair in stationary-phase cells. This chain is G/U mismatch-specific DNA glycosylase, found in Klebsiella pneumoniae (strain 342).